A 459-amino-acid chain; its full sequence is 23S rRNA (uracil-C(5))-methyltransferase RlmCD (459 aa).

In terms of domain architecture, TRAM spans 6-64 (PVEKNEYYDVTFEDLTHEGAGVAKVQGFPIFVPNALPEEKAQIKVTRVKKGFAFGRLIE). Cys-77, Cys-83, Cys-86, and Cys-166 together coordinate [4Fe-4S] cluster. Residues Gln-290, Tyr-319, Glu-340, and Asp-388 each contribute to the S-adenosyl-L-methionine site. Cys-415 serves as the catalytic Nucleophile.

It belongs to the class I-like SAM-binding methyltransferase superfamily. RNA M5U methyltransferase family.

It carries out the reaction uridine(747) in 23S rRNA + S-adenosyl-L-methionine = 5-methyluridine(747) in 23S rRNA + S-adenosyl-L-homocysteine + H(+). The enzyme catalyses uridine(1939) in 23S rRNA + S-adenosyl-L-methionine = 5-methyluridine(1939) in 23S rRNA + S-adenosyl-L-homocysteine + H(+). Catalyzes the formation of 5-methyl-uridine at positions 747 (m5U747) and 1939 (m5U1939) in 23S rRNA. The sequence is that of 23S rRNA (uracil-C(5))-methyltransferase RlmCD (rlmCD) from Bacillus subtilis (strain 168).